The primary structure comprises 259 residues: uncharacterized protein (259 aa).

Positions 1–22 are cleaved as a signal peptide; it reads MKHSKKLLLCISFLLITFFISG. Cys-23 is lipidated: N-palmitoyl cysteine. Cys-23 is lipidated: S-diacylglycerol cysteine.

Belongs to the staphylococcal tandem lipoprotein family.

It is found in the cell membrane. This is an uncharacterized protein from Staphylococcus epidermidis (strain ATCC 35984 / DSM 28319 / BCRC 17069 / CCUG 31568 / BM 3577 / RP62A).